Here is a 62-residue protein sequence, read N- to C-terminus: Small ribosomal subunit protein bS21 (62 aa).

The span at 43–52 (VKKKLKSEAA) shows a compositional bias: basic and acidic residues. The tract at residues 43 to 62 (VKKKLKSEAARKRKAKKKRF) is disordered. Residues 53–62 (RKRKAKKKRF) show a composition bias toward basic residues.

It belongs to the bacterial ribosomal protein bS21 family.

This is Small ribosomal subunit protein bS21 from Levilactobacillus brevis (strain ATCC 367 / BCRC 12310 / CIP 105137 / JCM 1170 / LMG 11437 / NCIMB 947 / NCTC 947) (Lactobacillus brevis).